A 788-amino-acid polypeptide reads, in one-letter code: Protein translocase subunit SecA 2 (788 aa).

ATP contacts are provided by residues Gln-86, 104 to 108 (GEGKT), and Asp-493.

It belongs to the SecA family. In terms of assembly, monomer and homodimer. Part of the essential Sec protein translocation apparatus which comprises SecA, SecYEG and auxiliary proteins SecDF. Other proteins may also be involved.

It is found in the cell membrane. The protein localises to the cytoplasm. It carries out the reaction ATP + H2O + cellular proteinSide 1 = ADP + phosphate + cellular proteinSide 2.. Functionally, part of the Sec protein translocase complex. Interacts with the SecYEG preprotein conducting channel. Has a central role in coupling the hydrolysis of ATP to the transfer of proteins into and across the cell membrane, serving as an ATP-driven molecular motor driving the stepwise translocation of polypeptide chains across the membrane. This is Protein translocase subunit SecA 2 from Bacillus cereus (strain ZK / E33L).